The following is an 866-amino-acid chain: Protein translocase subunit SecA (866 aa).

Residues Q87, G105 to T109, and D514 contribute to the ATP site. Residues V819–Y858 are disordered. Zn(2+) is bound by residues C850, C852, C861, and C862.

The protein belongs to the SecA family. As to quaternary structure, monomer and homodimer. Part of the essential Sec protein translocation apparatus which comprises SecA, SecYEG and auxiliary proteins SecDF. Other proteins may also be involved. Requires Zn(2+) as cofactor.

The protein localises to the cell inner membrane. The protein resides in the cytoplasm. The catalysed reaction is ATP + H2O + cellular proteinSide 1 = ADP + phosphate + cellular proteinSide 2.. In terms of biological role, part of the Sec protein translocase complex. Interacts with the SecYEG preprotein conducting channel. Has a central role in coupling the hydrolysis of ATP to the transfer of proteins into and across the cell membrane, serving as an ATP-driven molecular motor driving the stepwise translocation of polypeptide chains across the membrane. The chain is Protein translocase subunit SecA from Elusimicrobium minutum (strain Pei191).